Here is a 479-residue protein sequence, read N- to C-terminus: Cardiolipin synthase (479 aa).

The next 2 helical transmembrane spans lie at 5–25 (SLLL…IIFL) and 34–54 (WAWV…YLIF). 2 consecutive PLD phosphodiesterase domains span residues 216–243 (INYR…GDEY) and 392–419 (QNGF…DVRS). Active-site residues include H221, K223, D228, H397, K399, and D404.

The protein belongs to the phospholipase D family. Cardiolipin synthase subfamily.

Its subcellular location is the cell membrane. The enzyme catalyses 2 a 1,2-diacyl-sn-glycero-3-phospho-(1'-sn-glycerol) = a cardiolipin + glycerol. Its function is as follows. Catalyzes the reversible phosphatidyl group transfer from one phosphatidylglycerol molecule to another to form cardiolipin (CL) (diphosphatidylglycerol) and glycerol. This Oceanobacillus iheyensis (strain DSM 14371 / CIP 107618 / JCM 11309 / KCTC 3954 / HTE831) protein is Cardiolipin synthase (cls).